The following is a 496-amino-acid chain: L-arabinose isomerase (496 aa).

Glu-306, Glu-331, His-348, and His-447 together coordinate Mn(2+).

This sequence belongs to the arabinose isomerase family. It depends on Mn(2+) as a cofactor.

It carries out the reaction beta-L-arabinopyranose = L-ribulose. It participates in carbohydrate degradation; L-arabinose degradation via L-ribulose; D-xylulose 5-phosphate from L-arabinose (bacterial route): step 1/3. Functionally, catalyzes the conversion of L-arabinose to L-ribulose. The protein is L-arabinose isomerase of Geobacillus kaustophilus (strain HTA426).